Consider the following 177-residue polypeptide: Large ribosomal subunit protein uL6 (177 aa).

It belongs to the universal ribosomal protein uL6 family. As to quaternary structure, part of the 50S ribosomal subunit.

In terms of biological role, this protein binds to the 23S rRNA, and is important in its secondary structure. It is located near the subunit interface in the base of the L7/L12 stalk, and near the tRNA binding site of the peptidyltransferase center. The chain is Large ribosomal subunit protein uL6 from Pseudomonas putida (strain W619).